A 151-amino-acid chain; its full sequence is MLP-like protein 329 (151 aa).

Belongs to the MLP family.

In Arabidopsis thaliana (Mouse-ear cress), this protein is MLP-like protein 329 (MLP329).